The following is a 355-amino-acid chain: Peptide chain release factor 1 (355 aa).

Q233 carries the post-translational modification N5-methylglutamine. Positions 280–293 (KRRQKEQERSDSRR) are enriched in basic and acidic residues. Positions 280–310 (KRRQKEQERSDSRRGQVGSGDRSERIRTYNF) are disordered.

The protein belongs to the prokaryotic/mitochondrial release factor family. Post-translationally, methylated by PrmC. Methylation increases the termination efficiency of RF1.

The protein resides in the cytoplasm. Functionally, peptide chain release factor 1 directs the termination of translation in response to the peptide chain termination codons UAG and UAA. The chain is Peptide chain release factor 1 (prfA) from Rickettsia prowazekii (strain Madrid E).